A 566-amino-acid chain; its full sequence is Proline--tRNA ligase (566 aa).

It belongs to the class-II aminoacyl-tRNA synthetase family. ProS type 1 subfamily. Homodimer.

Its subcellular location is the cytoplasm. The catalysed reaction is tRNA(Pro) + L-proline + ATP = L-prolyl-tRNA(Pro) + AMP + diphosphate. In terms of biological role, catalyzes the attachment of proline to tRNA(Pro) in a two-step reaction: proline is first activated by ATP to form Pro-AMP and then transferred to the acceptor end of tRNA(Pro). As ProRS can inadvertently accommodate and process non-cognate amino acids such as alanine and cysteine, to avoid such errors it has two additional distinct editing activities against alanine. One activity is designated as 'pretransfer' editing and involves the tRNA(Pro)-independent hydrolysis of activated Ala-AMP. The other activity is designated 'posttransfer' editing and involves deacylation of mischarged Ala-tRNA(Pro). The misacylated Cys-tRNA(Pro) is not edited by ProRS. The protein is Proline--tRNA ligase of Bacillus mycoides (strain KBAB4) (Bacillus weihenstephanensis).